The following is a 253-amino-acid chain: Transmembrane protein 69 (253 aa).

5 helical membrane passes run 104-124 (ALYL…LMNV), 137-157 (VAYG…FAIP), 165-185 (DWMN…ALLF), 192-212 (AAVL…ALLP), and 223-243 (AILT…SSVY).

It is found in the membrane. The sequence is that of Transmembrane protein 69 (tmem69) from Xenopus tropicalis (Western clawed frog).